We begin with the raw amino-acid sequence, 172 residues long: Small ribosomal subunit protein uS5 (172 aa).

Residues 17–80 (MREKMIAVNR…EEARRKMIKV (64 aa)) form the S5 DRBM domain.

It belongs to the universal ribosomal protein uS5 family. As to quaternary structure, part of the 30S ribosomal subunit. Contacts proteins S4 and S8.

With S4 and S12 plays an important role in translational accuracy. Its function is as follows. Located at the back of the 30S subunit body where it stabilizes the conformation of the head with respect to the body. The sequence is that of Small ribosomal subunit protein uS5 from Herminiimonas arsenicoxydans.